We begin with the raw amino-acid sequence, 204 residues long: Guanine-specific ADP-ribosyl transferase (204 aa).

The signal sequence occupies residues 1–42; sequence MITTSLRRRTAAAVLSLSAVLATTAATAPGAAPAPSAAPAKA. Cys-46 and Cys-76 are oxidised to a cystine. NADH-binding positions include 81–85 and Lys-98; that span reads RSDSR. Residues 111–114, 132–134, Trp-159, and Gln-162 each bind GDP; these read VLVN and WYK. The short motif at 132–136 is the PN (phosphate-nicotinamide) loop element; sequence WYKSG. Cys-180 and Cys-194 are joined by a disulfide.

This sequence belongs to the pierisin ADP-ribosyltransferase family. In terms of assembly, monomer.

Its subcellular location is the secreted. The catalysed reaction is guanosine + NAD(+) = N(2)-(ADP-D-ribosyl)-guanosine + nicotinamide + H(+). It carries out the reaction a 2'-deoxyguanosine in DNA + NAD(+) = an N(2)-(ADP-L-ribosyl)-2'-deoxyguanosine in DNA + nicotinamide + H(+). It catalyses the reaction 2'-deoxyguanosine + NAD(+) = N(2)-(ADP-D-ribosyl)-2'-deoxyguanosine + nicotinamide + H(+). The enzyme catalyses GMP + NAD(+) = N(2)-(ADP-D-ribosyl)-GMP + nicotinamide + H(+). The catalysed reaction is GTP + NAD(+) = N(2)-(ADP-D-ribosyl)-GTP + nicotinamide + H(+). It carries out the reaction dGMP + NAD(+) = N(2)-(ADP-D-ribosyl)-dGMP + nicotinamide + H(+). It catalyses the reaction dGTP + NAD(+) = N(2)-(ADP-D-ribosyl)-dGTP + nicotinamide + H(+). The enzyme catalyses 3',5'-cyclic GMP + NAD(+) = N(2)-(ADP-D-ribosyl)-3',5'-cyclic GMP + nicotinamide + H(+). The catalysed reaction is guanine + NAD(+) = N(2)-(ADP-D-ribosyl)-guanine + nicotinamide + H(+). It carries out the reaction GDP + NAD(+) = N(2)-(ADP-D-ribosyl)-GDP + nicotinamide + H(+). With respect to regulation, inhibited by NADH. Functionally, ADP-ribosylates the N2 amino group of guanosine, deoxyguanosine, GMP, dGMP, cGMP, GTP and dGTP; oligo-guanosine, oligo-deoxyguanosine and tRNA are ADP-ribosylated less efficiently, while dsDNA is a very poor substrate. Also acts on GDP. The protein is Guanine-specific ADP-ribosyl transferase of Streptomyces coelicolor (strain ATCC BAA-471 / A3(2) / M145).